Reading from the N-terminus, the 123-residue chain is Seminal vesicle secretory protein 5 (123 aa).

Residues 1-21 (MSPTGFFLLTVLLVLVTEAAS) form the signal peptide. The tract at residues 50-123 (GSSSTFGAFS…TKVKTRITRK (74 aa)) is disordered. The segment covering 64–75 (SRSNFKSKSPSS) has biased composition (low complexity). The segment covering 77–87 (TREKVNEESRS) has biased composition (basic and acidic residues).

This sequence belongs to the SVP2/SVP5/SVP6 family. As to expression, testis.

Its subcellular location is the secreted. It localises to the extracellular space. The protein is Seminal vesicle secretory protein 5 (Svs5) of Rattus norvegicus (Rat).